The primary structure comprises 295 residues: GTPase Era (295 aa).

The Era-type G domain occupies 5–172 (YCGYAAIIGR…EQAVHQLMPE (168 aa)). The tract at residues 13–20 (GRPNVGKS) is G1. 13–20 (GRPNVGKS) lines the GTP pocket. Positions 39–43 (QTTRY) are G2. The interval 60–63 (DTPG) is G3. Residues 60 to 64 (DTPGL) and 121 to 124 (NKVD) contribute to the GTP site. A G4 region spans residues 121-124 (NKVD). The tract at residues 151–153 (LSA) is G5. The KH type-2 domain maps to 203-279 (LGQEIPYSLA…FLQLWVKVKS (77 aa)).

This sequence belongs to the TRAFAC class TrmE-Era-EngA-EngB-Septin-like GTPase superfamily. Era GTPase family. In terms of assembly, monomer.

It is found in the cytoplasm. Its subcellular location is the cell inner membrane. Its function is as follows. An essential GTPase that binds both GDP and GTP, with rapid nucleotide exchange. Plays a role in 16S rRNA processing and 30S ribosomal subunit biogenesis and possibly also in cell cycle regulation and energy metabolism. This chain is GTPase Era, found in Coxiella burnetii (strain CbuK_Q154) (Coxiella burnetii (strain Q154)).